The sequence spans 433 residues: MSAENQEELLDYSDSEEIAVPTTTQAGEGESANDKEADKKGSYVGIHATGFRDFLLKPELLRAIGDCGFEHPSEVQQVCIPQSILGTDVLCQAKSGLGKTAVFVLSTLQQLDPVAGEISTLVICHTRELAYQIRNEYARFSKYMPDVKTEVFYGGTPVKRDIEKLKNKDTCPHIVVATPGRLHALVQEKAIRLNNVKSFVIDECDKVLESLDMRRDVQDIFRATPHQKQVMMFSATLSQDIRPVCKKFMQNPLEIYVDDEAKLTLHGLQQYYIKLEEKEKNRKLSDLLDSLEFNQVIIFVKSTQRANELNKLLCACNFPSIAVHSGLPQEERIERYKSFKEFNKRICVSTDVFGRGIDIERINLAINYDLPNEADQYLHRVGRAGRFGTKGLGISFVSTKEDEEVLEKIQSRFDVKITEFPEEGVDPSTYMNT.

Positions 1–17 (MSAENQEELLDYSDSEE) are enriched in acidic residues. Residues 1-39 (MSAENQEELLDYSDSEEIAVPTTTQAGEGESANDKEADK) are disordered. A Q motif motif is present at residues 49 to 77 (TGFRDFLLKPELLRAIGDCGFEHPSEVQQ). Residues 80–255 (IPQSILGTDV…KKFMQNPLEI (176 aa)) form the Helicase ATP-binding domain. 93-100 (AKSGLGKT) contacts ATP. The DEAD box signature appears at 202–205 (DECD). The region spanning 267–428 (GLQQYYIKLE…EFPEEGVDPS (162 aa)) is the Helicase C-terminal domain.

Belongs to the DEAD box helicase family. DECD subfamily.

The protein localises to the nucleus. The catalysed reaction is ATP + H2O = ADP + phosphate + H(+). ATP-binding RNA helicase involved in transcription elongation and required for the export of mRNA out of the nucleus. SUB2 also plays a role in pre-mRNA splicing and spliceosome assembly. May be involved in rDNA and telomeric silencing, and maintenance of genome integrity. This is ATP-dependent RNA helicase SUB2 (SUB2) from Lodderomyces elongisporus (strain ATCC 11503 / CBS 2605 / JCM 1781 / NBRC 1676 / NRRL YB-4239) (Yeast).